We begin with the raw amino-acid sequence, 371 residues long: tRNA-specific 2-thiouridylase MnmA (371 aa).

ATP contacts are provided by residues 13-20 (GMSGGVDS) and methionine 39. The tract at residues 99 to 101 (NPD) is interaction with target base in tRNA. Cysteine 104 functions as the Nucleophile in the catalytic mechanism. Cysteine 104 and cysteine 200 are disulfide-bonded. An ATP-binding site is contributed by glycine 128. The tract at residues 150 to 152 (KDQ) is interaction with tRNA. Residue cysteine 200 is the Cysteine persulfide intermediate of the active site. Residues 308-309 (RY) are interaction with tRNA.

The protein belongs to the MnmA/TRMU family.

It is found in the cytoplasm. It catalyses the reaction S-sulfanyl-L-cysteinyl-[protein] + uridine(34) in tRNA + AH2 + ATP = 2-thiouridine(34) in tRNA + L-cysteinyl-[protein] + A + AMP + diphosphate + H(+). Its function is as follows. Catalyzes the 2-thiolation of uridine at the wobble position (U34) of tRNA, leading to the formation of s(2)U34. The chain is tRNA-specific 2-thiouridylase MnmA from Bacillus mycoides (strain KBAB4) (Bacillus weihenstephanensis).